The sequence spans 400 residues: MSDIISIKDIDLAKKKVFIRCDFNVPQDDFLNITDDRRIRSAIPTIRYCLDNGCSVILASHLGRPKEISSKYSLEPVAKRLARLLDKEIIMAKDVIGEDAKTKAMNLKAGEILLLENLRFEKGETKNDENLAKELASMVQVYINDAFGVCHRAHSSVEAITKFFDEKHKGAGFLLQKEIDFASNLIKHPARPFVAVVGGSKVSGKLQALTNLLPKVDKLIIGGGMAFTFLKALGYDIGNSLLEEELLEEANKILTKGKNLGVKIYLPVDVVAAPACSQDAPMKFVPVQEIPNGWMGLDIGPASVRLFKEVISDAQTIWWNGPMGVFEIDKFSKGSIKMSHYISEGHATSVVGGGDTADVVARAGDADEMTFISTGGGASLELIEGKELPGVKALRSKENE.

Substrate contacts are provided by residues 22–24 (DFN), arginine 38, 61–64 (HLGR), arginine 119, and arginine 152. Residues lysine 205, glycine 296, glutamate 327, and 353-356 (GGDT) each bind ATP.

It belongs to the phosphoglycerate kinase family. In terms of assembly, monomer.

It localises to the cytoplasm. It carries out the reaction (2R)-3-phosphoglycerate + ATP = (2R)-3-phospho-glyceroyl phosphate + ADP. It participates in carbohydrate degradation; glycolysis; pyruvate from D-glyceraldehyde 3-phosphate: step 2/5. The chain is Phosphoglycerate kinase from Campylobacter jejuni subsp. jejuni serotype O:6 (strain 81116 / NCTC 11828).